Here is a 448-residue protein sequence, read N- to C-terminus: Clusterin (448 aa).

The signal sequence occupies residues Met1–Gly21. A Nuclear localization signal motif is present at residues Lys77–Lys80. 5 disulfides stabilise this stretch: Cys101–Cys312, Cys112–Cys304, Cys115–Cys301, Cys120–Cys294, and Cys128–Cys284. Asn102 carries an N-linked (GlcNAc...) asparagine glycan. Ser132 is modified (phosphoserine). N-linked (GlcNAc...) asparagine glycosylation is found at Asn144, Asn290, Asn327, Asn353, and Asn373. Ser395 bears the Phosphoserine mark. The Nuclear localization signal motif lies at Arg442–Arg446.

It belongs to the clusterin family. Antiparallel disulfide-linked heterodimer of an alpha chain and a beta chain. Self-associates and forms higher oligomers. Interacts with a broad range of misfolded proteins, including APP, APOC2 and LYZ. Slightly acidic pH promotes interaction with misfolded proteins. Forms high-molecular weight oligomers upon interaction with misfolded proteins. Interacts with APOA1, LRP2, CLUAP1 and PON1. Interacts with the complement membrane attack complex. Interacts (via alpha chain) with XRCC6. Interacts with SYVN1, COMMD1, BTRC, CUL1 and with ubiquitin and SCF (SKP1-CUL1-F-box protein) E3 ubiquitin-protein ligase complexes. Interacts (via alpha chain) with BAX in stressed cells, where BAX undergoes a conformation change leading to association with the mitochondrial membrane. Does not interact with BAX in unstressed cells. Found in a complex with LTF, CLU, EPPIN and SEMG1. Interacts (immaturely glycosylated pre-secreted form) with HSPA5; this interaction promotes CLU stability and facilitates stress-induced CLU retrotranslocation from the secretory pathway to the mitochondria, thereby reducing stress-induced apoptosis by stabilizing mitochondrial membrane integrity. Interacts with BCL2L1; this interaction releases and activates BAX and promotes cell death. Interacts with TGFBR2 and ACVR1. Interacts (secreted form) with STMN3; this interaction may act as an important modulator during neuronal differentiation. Interacts with VLDLR and LRP8. In terms of processing, proteolytically cleaved on its way through the secretory system, probably within the Golgi lumen. Proteolytic cleavage is not necessary for its chaperone activity. All non-secreted forms are not proteolytically cleaved. Chaperone activity of uncleaved forms is dependent on a non-reducing environment. Polyubiquitinated, leading to proteasomal degradation. Under cellular stress, the intracellular level of cleaved form is reduced due to proteasomal degradation. Post-translationally, extensively glycosylated with sulfated N-linked carbohydrates. About 30% of the protein mass is comprised of complex N-linked carbohydrate. Endoplasmic reticulum (ER) stress induces changes in glycosylation status and increases level of hypoglycosylated forms. Core carbohydrates are essential for chaperone activity. Non-secreted forms are hypoglycosylated or unglycosylated. In terms of tissue distribution, most abundant in stomach, liver, brain, and testis, with intermediate levels in heart, ovary and kidney.

Its subcellular location is the secreted. The protein resides in the nucleus. The protein localises to the cytoplasm. It localises to the mitochondrion membrane. It is found in the cytosol. Its subcellular location is the microsome. The protein resides in the endoplasmic reticulum. The protein localises to the mitochondrion. It localises to the perinuclear region. It is found in the cytoplasmic vesicle. Its subcellular location is the secretory vesicle. The protein resides in the chromaffin granule. Its function is as follows. Functions as extracellular chaperone that prevents aggregation of non native proteins. Prevents stress-induced aggregation of blood plasma proteins. Inhibits formation of amyloid fibrils by APP, APOC2, B2M, CALCA, CSN3, SNCA and aggregation-prone LYZ variants (in vitro). Does not require ATP. Maintains partially unfolded proteins in a state appropriate for subsequent refolding by other chaperones, such as HSPA8/HSC70. Does not refold proteins by itself. Binding to cell surface receptors triggers internalization of the chaperone-client complex and subsequent lysosomal or proteasomal degradation. When secreted, protects cells against apoptosis and against cytolysis by complement: inhibits assembly of the complement membrane attack complex (MAC) by preventing polymerization of C9 pore component of the MAC complex. Intracellular forms interact with ubiquitin and SCF (SKP1-CUL1-F-box protein) E3 ubiquitin-protein ligase complexes and promote the ubiquitination and subsequent proteasomal degradation of target proteins. Promotes proteasomal degradation of COMMD1 and IKBKB. Modulates NF-kappa-B transcriptional activity. Following stress, promotes apoptosis. Inhibits apoptosis when associated with the mitochondrial membrane by interference with BAX-dependent release of cytochrome c into the cytoplasm. Plays a role in the regulation of cell proliferation. Following ER stress, suppresses stress-induced apoptosis by stabilizing mitochondrial membrane integrity through interaction with HSPA5. When secreted, does not affect caspase or BAX-mediated intrinsic apoptosis and TNF-induced NF-kappa-B-activity. When secreted, acts as an important modulator during neuronal differentiation through interaction with STMN3. Plays a role in the clearance of immune complexes that arise during cell injury. This Mus musculus (Mouse) protein is Clusterin.